Reading from the N-terminus, the 134-residue chain is Holo-[acyl-carrier-protein] synthase (134 aa).

2 residues coordinate Mg(2+): aspartate 8 and glutamate 57.

Belongs to the P-Pant transferase superfamily. AcpS family. Mg(2+) is required as a cofactor.

The protein resides in the cytoplasm. The catalysed reaction is apo-[ACP] + CoA = holo-[ACP] + adenosine 3',5'-bisphosphate + H(+). Transfers the 4'-phosphopantetheine moiety from coenzyme A to a Ser of acyl-carrier-protein. In Rhizobium johnstonii (strain DSM 114642 / LMG 32736 / 3841) (Rhizobium leguminosarum bv. viciae), this protein is Holo-[acyl-carrier-protein] synthase.